The primary structure comprises 318 residues: NLP effector protein 9 (318 aa).

The signal sequence occupies residues 1 to 19; that stretch reads MRLFAFLWSSVAFLSTVQA. Residues 24-35 show a composition bias toward low complexity; the sequence is TASQTQDDSSTP. 2 disordered regions span residues 24-43 and 50-93; these read TASQ…PDKY and LRTK…PAPT. The segment covering 55-65 has biased composition (polar residues); that stretch reads PMATPNRTIMP. A glycan (N-linked (GlcNAc...) asparagine) is linked at N60. Pro residues predominate over residues 73–93; sequence PEPPTPEPTYLPTLSPTPAPT. A Conserved undecapeptide motif I motif is present at residues 185-195; the sequence is AIMYSWYFPKD. The Hepta-peptide GHRHDWE motif II motif lies at 202 to 208; the sequence is GHRHDWE.

Belongs to the Necrosis inducing protein (NPP1) family.

It localises to the secreted. Functionally, secreted effector that contributes to virulence during infection by P.capsici. Induces distinct chlorosis at 3 days after inoculation of host C.annuum leaves, and all the chlorotic areas gradually turn brown and become moderately necrotic at 7 days after inoculation. Caused only small necrotic areas at 7 days after non-host N.benthamiana leaves infection. This chain is NLP effector protein 9, found in Phytophthora capsici.